The chain runs to 409 residues: Putative fatty acyl-CoA reductase 7 (409 aa).

The protein belongs to the fatty acyl-CoA reductase family.

In Arabidopsis thaliana (Mouse-ear cress), this protein is Putative fatty acyl-CoA reductase 7 (FAR7).